Reading from the N-terminus, the 428-residue chain is Elongation factor 1-alpha (428 aa).

In terms of domain architecture, tr-type G spans 5–225 (KPILNVAFIG…DGFQPPEKPT (221 aa)). Positions 14-21 (GHVDAGKS) are G1. Residue 14 to 21 (GHVDAGKS) coordinates GTP. Ser21 serves as a coordination point for Mg(2+). The tract at residues 70 to 74 (GVTID) is G2. The segment at 91 to 94 (DCPG) is G3. Residues 91–95 (DCPGH) and 149–152 (NKMD) each bind GTP. A G4 region spans residues 149-152 (NKMD). Residues 189 to 191 (ASL) are G5.

Belongs to the TRAFAC class translation factor GTPase superfamily. Classic translation factor GTPase family. EF-Tu/EF-1A subfamily.

Its subcellular location is the cytoplasm. It catalyses the reaction GTP + H2O = GDP + phosphate + H(+). GTP hydrolase that promotes the GTP-dependent binding of aminoacyl-tRNA to the A-site of ribosomes during protein biosynthesis. This Methanococcus vannielii (strain ATCC 35089 / DSM 1224 / JCM 13029 / OCM 148 / SB) protein is Elongation factor 1-alpha.